Reading from the N-terminus, the 323-residue chain is HPr kinase/phosphorylase (323 aa).

Catalysis depends on residues His146 and Lys167. 161-168 (GESGLGKS) is a binding site for ATP. Ser168 contacts Mg(2+). Catalysis depends on Asp185, which acts as the Proton acceptor; for phosphorylation activity. Proton donor; for dephosphorylation activity. Residues 209-218 (LEVRGLGLLD) form an important for the catalytic mechanism of both phosphorylation and dephosphorylation region. Glu210 is a Mg(2+) binding site. Residue Arg250 is part of the active site. Residues 271 to 276 (QVAAGR) are important for the catalytic mechanism of dephosphorylation.

It belongs to the HPrK/P family. Homohexamer. Requires Mg(2+) as cofactor.

The catalysed reaction is [HPr protein]-L-serine + ATP = [HPr protein]-O-phospho-L-serine + ADP + H(+). The enzyme catalyses [HPr protein]-O-phospho-L-serine + phosphate + H(+) = [HPr protein]-L-serine + diphosphate. Catalyzes the ATP- as well as the pyrophosphate-dependent phosphorylation of a specific serine residue in HPr, a phosphocarrier protein of the phosphoenolpyruvate-dependent sugar phosphotransferase system (PTS). HprK/P also catalyzes the pyrophosphate-producing, inorganic phosphate-dependent dephosphorylation (phosphorolysis) of seryl-phosphorylated HPr (P-Ser-HPr). The sequence is that of HPr kinase/phosphorylase from Cupriavidus metallidurans (strain ATCC 43123 / DSM 2839 / NBRC 102507 / CH34) (Ralstonia metallidurans).